A 124-amino-acid polypeptide reads, in one-letter code: Large ribosomal subunit protein bL20c (124 aa).

This sequence belongs to the bacterial ribosomal protein bL20 family.

It localises to the plastid. The protein resides in the chloroplast. Its function is as follows. Binds directly to 23S ribosomal RNA and is necessary for the in vitro assembly process of the 50S ribosomal subunit. It is not involved in the protein synthesizing functions of that subunit. The polypeptide is Large ribosomal subunit protein bL20c (rpl20) (Euglena gracilis).